A 239-amino-acid chain; its full sequence is Uridylate kinase (239 aa).

10–13 contacts ATP; that stretch reads KFSG. Positions 18–23 are involved in allosteric activation by GTP; it reads GENGFG. G52 is a UMP binding site. The ATP site is built by G53 and R57. Residues D73 and 134–141 each bind UMP; that span reads TGNPYFTT. ATP is bound by residues T161, Y167, and D170.

The protein belongs to the UMP kinase family. In terms of assembly, homohexamer.

The protein resides in the cytoplasm. It carries out the reaction UMP + ATP = UDP + ADP. It functions in the pathway pyrimidine metabolism; CTP biosynthesis via de novo pathway; UDP from UMP (UMPK route): step 1/1. Its activity is regulated as follows. Allosterically activated by GTP. Inhibited by UTP. Its function is as follows. Catalyzes the reversible phosphorylation of UMP to UDP. In Campylobacter jejuni subsp. doylei (strain ATCC BAA-1458 / RM4099 / 269.97), this protein is Uridylate kinase.